The sequence spans 296 residues: tRNA dimethylallyltransferase (296 aa).

2–9 contributes to the ATP binding site; the sequence is GPTASGKT. 4–9 serves as a coordination point for substrate; the sequence is TASGKT. Interaction with substrate tRNA stretches follow at residues 27 to 30, 151 to 155, and 232 to 237; these read DSAL, QRLSR, and RCVGYR.

This sequence belongs to the IPP transferase family. In terms of assembly, monomer. Requires Mg(2+) as cofactor.

It carries out the reaction adenosine(37) in tRNA + dimethylallyl diphosphate = N(6)-dimethylallyladenosine(37) in tRNA + diphosphate. Catalyzes the transfer of a dimethylallyl group onto the adenine at position 37 in tRNAs that read codons beginning with uridine, leading to the formation of N6-(dimethylallyl)adenosine (i(6)A). In Shewanella sp. (strain ANA-3), this protein is tRNA dimethylallyltransferase.